The primary structure comprises 364 residues: Protein BRI1-5 ENHANCED 1 (364 aa).

The span at 1-11 (MVREEQEEDDN) shows a compositional bias: acidic residues. Positions 1–22 (MVREEQEEDDNNNNNNGGGERK) are disordered. NADP(+) contacts are provided by residues 44-49 (GGSGFV), R69, 98-99 (DL), Y202, K206, V232, and S244. The active-site Proton donor is the K206.

This sequence belongs to the NAD(P)-dependent epimerase/dehydratase family. As to quaternary structure, monomer. As to expression, mainly present in cell elongating-containing tissues. Strongly expressed in roots and flowers, also observed in petioles, stems, leaves and siliques.

The protein resides in the cytoplasm. It participates in plant hormone biosynthesis; brassinosteroid biosynthesis. Functionally, element of the brassinosteroid metabolic pathway that regulates typhasterol (TY), castasterone (CS) and brassinolide (BL) levels. Involved in the control of organ elongation. The polypeptide is Protein BRI1-5 ENHANCED 1 (Arabidopsis thaliana (Mouse-ear cress)).